The primary structure comprises 422 residues: S100P-binding protein (422 aa).

3 disordered regions span residues 1–28 (MMCSLVPSEQSSGTSLLPKDNAPFSWSS), 61–135 (LKDD…TPAK), and 170–292 (YVSE…DSGK). The span at 80 to 90 (DDSRNVEKGEK) shows a compositional bias: basic and acidic residues. S195 is subject to Phosphoserine. Residues 231–241 (VSDKNMSDSKK) show a composition bias toward basic and acidic residues. A compositionally biased stretch (polar residues) spans 255–269 (TPNTGSSRRNGSYKS). Over residues 274–283 (KLPVSSSSSK) the composition is skewed to low complexity.

Interacts with S100P.

The protein localises to the nucleus. The sequence is that of S100P-binding protein from Bos taurus (Bovine).